The chain runs to 138 residues: Succinate dehydrogenase assembly factor 4, mitochondrial (138 aa).

A mitochondrion-targeting transit peptide spans 1-32 (MLCAIKSTGYRYPRTGALNLLRGRPFNMATRK). The span at 71–98 (QATGDRTKESLNSPLLTKNDIGSFSPEF) shows a compositional bias: polar residues. Positions 71-138 (QATGDRTKES…YSFNGRVTDF (68 aa)) are disordered.

This sequence belongs to the SDHAF4 family. As to quaternary structure, interacts with SDH1 in its FAD-bound form.

It localises to the mitochondrion matrix. Functionally, plays an essential role in the assembly of succinate dehydrogenase (SDH), an enzyme complex (also referred to as respiratory complex II) that is a component of both the tricarboxylic acid (TCA) cycle and the mitochondrial electron transport chain, and which couples the oxidation of succinate to fumarate with the reduction of ubiquinone (coenzyme Q) to ubiquinol. Binds to the flavoprotein subunit SDH1 in its FAD-bound form, blocking the generation of excess reactive oxygen species (ROS) and facilitating its assembly with the iron-sulfur protein subunit SDH2 into the SDH catalytic dimer. In Saccharomyces cerevisiae (strain ATCC 204508 / S288c) (Baker's yeast), this protein is Succinate dehydrogenase assembly factor 4, mitochondrial.